A 597-amino-acid chain; its full sequence is Probable translation initiation factor IF-2 (597 aa).

The tr-type G domain maps to 10–226 (LRTPIVAVLG…LMGLSQRFMK (217 aa)). The G1 stretch occupies residues 19–26 (GHVDHGKT). Position 19–26 (19–26 (GHVDHGKT)) interacts with GTP. The segment at 44–48 (AITQH) is G2. Residues 81 to 84 (DTPG) are G3. GTP-binding positions include 81–85 (DTPGH) and 135–138 (NKVD). The segment at 135–138 (NKVD) is G4. The G5 stretch occupies residues 203 to 205 (SAI).

This sequence belongs to the TRAFAC class translation factor GTPase superfamily. Classic translation factor GTPase family. IF-2 subfamily.

Function in general translation initiation by promoting the binding of the formylmethionine-tRNA to ribosomes. Seems to function along with eIF-2. This chain is Probable translation initiation factor IF-2, found in Halorubrum lacusprofundi (strain ATCC 49239 / DSM 5036 / JCM 8891 / ACAM 34).